Consider the following 468-residue polypeptide: Cyclin-T1.1 (468 aa).

The segment covering 336 to 354 (KERGVEEERRKRERDRMAG) has biased composition (basic and acidic residues). Residues 336-468 (KERGVEEERR…DMDLEDGELE (133 aa)) are disordered. Residues 387 to 402 (APPPIPPQLNFPPPPI) are compositionally biased toward pro residues. Acidic residues predominate over residues 458–468 (SDMDLEDGELE).

The protein belongs to the cyclin family. Cyclin C subfamily.

Regulatory subunit of the cyclin-dependent kinase pair (CDK9/cyclin T) complex, also called positive transcription elongation factor B (P-TEFb), which is proposed to facilitate the transition from abortive to production elongation by phosphorylating the CTD (carboxy-terminal domain) of the large subunit of RNA polymerase II (RNAP II). The chain is Cyclin-T1.1 from Caenorhabditis elegans.